The sequence spans 327 residues: WRKY transcription factor WRKY76 (327 aa).

Residues 56–76 are a coiled coil; the sequence is AKIVEAKVTQMSEENRRLTEV. The tract at residues 87–135 is disordered; it reads RLGLDGSASPPRPVSPLSGKKRSRESMETANSCDANSNRHQGGDADHAE. The Nuclear localization signal signature appears at 106–112; that stretch reads KKRSRES. The segment covering 114 to 126 has biased composition (polar residues); sequence ETANSCDANSNRH. Residues 160-226 constitute a DNA-binding region (WRKY); sequence DTSLVVKDGY…YEGEHNHPHP (67 aa).

Belongs to the WRKY group II-a family.

It is found in the nucleus. In terms of biological role, transcription repressor. Interacts specifically with the W box (5'-(T)TGAC[CT]-3'), a frequently occurring elicitor-responsive cis-acting element. Regulates, probably indirectly, the activation of defense-related genes during defense response. Modulates plant innate immunity against X.oryzae pv. oryzae (Xoo). The polypeptide is WRKY transcription factor WRKY76 (Oryza sativa subsp. japonica (Rice)).